The following is a 286-amino-acid chain: MTHLTQLEIIIEKAFDDRDSINTTTKGEIRESVEHTLSLLDKGEIRVAERQKNGQWYVHQWLKKAVLLSFRLNPMQIITGGINGTHWWDKVPSKFSGWKEDDFQKAGFRSVPGAIVRHSAYVAPNVILMPSFINLGAFVDEGTMVDTWTTVGSCAQIGKHVHLSGGVGIGGVLEPLQANPTIIEDHCFIGARSEVVEGCIIREGAVLGMGVFIGQSTKIIDRTTGEIFIGEVPAYSVVVPGSLPGKPLPNGEAGPNLYCAVIVKRVDQKTREKTSINELLRDETQC.

Residues R109 and D146 each coordinate substrate.

It belongs to the transferase hexapeptide repeat family. Homotrimer.

The protein localises to the cytoplasm. It carries out the reaction (S)-2,3,4,5-tetrahydrodipicolinate + succinyl-CoA + H2O = (S)-2-succinylamino-6-oxoheptanedioate + CoA. Its pathway is amino-acid biosynthesis; L-lysine biosynthesis via DAP pathway; LL-2,6-diaminopimelate from (S)-tetrahydrodipicolinate (succinylase route): step 1/3. In Bartonella tribocorum (strain CIP 105476 / IBS 506), this protein is 2,3,4,5-tetrahydropyridine-2,6-dicarboxylate N-succinyltransferase.